Consider the following 131-residue polypeptide: D-ribose pyranase (131 aa).

H20 acts as the Proton donor in catalysis. Substrate is bound by residues D28, H98, and 120–122; that span reads YAN.

It belongs to the RbsD / FucU family. RbsD subfamily. As to quaternary structure, homodecamer.

Its subcellular location is the cytoplasm. The enzyme catalyses beta-D-ribopyranose = beta-D-ribofuranose. The protein operates within carbohydrate metabolism; D-ribose degradation; D-ribose 5-phosphate from beta-D-ribopyranose: step 1/2. Functionally, catalyzes the interconversion of beta-pyran and beta-furan forms of D-ribose. This chain is D-ribose pyranase, found in Laribacter hongkongensis (strain HLHK9).